The chain runs to 304 residues: MKVRVLGSAAGGGFPQWNCNCPNCDGLRRGTVRARARTQSSIAVTGDDENWVLFNASPDVLQQLREAPELQPARALRDTAIRAIVLIDAQIDHTTGLLMLREHRQPHALWCTAPVREDLSTGNPLFGVLGHYCGLDLNEIPLQGGFDIAGVPGVGFAALPLTSNAPPYSPRRDKPVPGDNIGVTLTDTRSGRRLFYAPGLGEMEPHVWAAMQAADCVLVDGTLWTDDEMIRLGASSKTSRAMGHLPQSGPGGMLEWLDRLPASTRKVLIHINNTNPILDEDSPQRAELAAHGVEVAWDGMVLSL.

The protein belongs to the PqqB family.

Its pathway is cofactor biosynthesis; pyrroloquinoline quinone biosynthesis. Functionally, may be involved in the transport of PQQ or its precursor to the periplasm. This chain is Coenzyme PQQ synthesis protein B, found in Azoarcus sp. (strain BH72).